We begin with the raw amino-acid sequence, 260 residues long: tRNA (guanine-N(7)-)-methyltransferase (260 aa).

The disordered stretch occupies residues 1–37 (MIHDPNDAGLPDQLPTPSSEAENSPAGDTTPPEEALH). Residues E90, E115, D142, and D165 each coordinate S-adenosyl-L-methionine. D165 is a catalytic residue. Substrate contacts are provided by residues K169, D201, and 236–239 (TKFE).

This sequence belongs to the class I-like SAM-binding methyltransferase superfamily. TrmB family.

The enzyme catalyses guanosine(46) in tRNA + S-adenosyl-L-methionine = N(7)-methylguanosine(46) in tRNA + S-adenosyl-L-homocysteine. The protein operates within tRNA modification; N(7)-methylguanine-tRNA biosynthesis. Functionally, catalyzes the formation of N(7)-methylguanine at position 46 (m7G46) in tRNA. The protein is tRNA (guanine-N(7)-)-methyltransferase of Paraburkholderia xenovorans (strain LB400).